We begin with the raw amino-acid sequence, 124 residues long: Small ribosomal subunit protein uS13 (124 aa).

Residues 91–124 (HRKGLPVNGQNTRNNARTRKGKPKAVTGKKQAGK) are disordered.

This sequence belongs to the universal ribosomal protein uS13 family. In terms of assembly, part of the 30S ribosomal subunit. Forms a loose heterodimer with protein S19. Forms two bridges to the 50S subunit in the 70S ribosome.

Functionally, located at the top of the head of the 30S subunit, it contacts several helices of the 16S rRNA. In the 70S ribosome it contacts the 23S rRNA (bridge B1a) and protein L5 of the 50S subunit (bridge B1b), connecting the 2 subunits; these bridges are implicated in subunit movement. Contacts the tRNAs in the A and P-sites. The polypeptide is Small ribosomal subunit protein uS13 (Acholeplasma laidlawii (strain PG-8A)).